A 148-amino-acid polypeptide reads, in one-letter code: Large ribosomal subunit protein bL9 (148 aa).

The protein belongs to the bacterial ribosomal protein bL9 family.

Functionally, binds to the 23S rRNA. The chain is Large ribosomal subunit protein bL9 from Parafrankia sp. (strain EAN1pec).